Consider the following 426-residue polypeptide: UDP-N-acetylglucosamine 1-carboxyvinyltransferase (426 aa).

22–23 (KN) lines the phosphoenolpyruvate pocket. UDP-N-acetyl-alpha-D-glucosamine is bound at residue Arg-94. The active-site Proton donor is the Cys-118. Cys-118 is modified (2-(S-cysteinyl)pyruvic acid O-phosphothioketal). Residues 123-127 (RPVDL), Asp-309, and Ile-331 contribute to the UDP-N-acetyl-alpha-D-glucosamine site.

This sequence belongs to the EPSP synthase family. MurA subfamily.

It localises to the cytoplasm. The catalysed reaction is phosphoenolpyruvate + UDP-N-acetyl-alpha-D-glucosamine = UDP-N-acetyl-3-O-(1-carboxyvinyl)-alpha-D-glucosamine + phosphate. Its pathway is cell wall biogenesis; peptidoglycan biosynthesis. Functionally, cell wall formation. Adds enolpyruvyl to UDP-N-acetylglucosamine. This chain is UDP-N-acetylglucosamine 1-carboxyvinyltransferase, found in Paracoccus denitrificans (strain Pd 1222).